The chain runs to 207 residues: Ribosomal RNA large subunit methyltransferase E (207 aa).

S-adenosyl-L-methionine-binding residues include Gly60, Trp62, Asp80, Asp96, and Asp121. Catalysis depends on Lys161, which acts as the Proton acceptor.

It belongs to the class I-like SAM-binding methyltransferase superfamily. RNA methyltransferase RlmE family.

The protein resides in the cytoplasm. The catalysed reaction is uridine(2552) in 23S rRNA + S-adenosyl-L-methionine = 2'-O-methyluridine(2552) in 23S rRNA + S-adenosyl-L-homocysteine + H(+). Its function is as follows. Specifically methylates the uridine in position 2552 of 23S rRNA at the 2'-O position of the ribose in the fully assembled 50S ribosomal subunit. This chain is Ribosomal RNA large subunit methyltransferase E, found in Pseudomonas aeruginosa (strain UCBPP-PA14).